The primary structure comprises 235 residues: uncharacterized protein (235 aa).

Residues 1-98 are disordered; that stretch reads MDTKLSVTGA…NKKNTLHYSK (98 aa). Residues Lys-16 and Lys-35 each participate in a glycyl lysine isopeptide (Lys-Gly) (interchain with G-Cter in ubiquitin) cross-link. The span at 38-50 shows a compositional bias: basic residues; that stretch reads NGNKKRNKNRNRN. Basic and acidic residues predominate over residues 51–60; the sequence is KKTETKEQNE.

This is an uncharacterized protein from Saccharomyces cerevisiae (strain ATCC 204508 / S288c) (Baker's yeast).